Consider the following 931-residue polypeptide: Bifunctional glutamine synthetase adenylyltransferase/adenylyl-removing enzyme (931 aa).

An adenylyl removase region spans residues 1-434 (MTLAPADLPA…STEFAALLAP (434 aa)). An adenylyl transferase region spans residues 441–931 (PDALANYWRS…ACIAAELPFA (491 aa)).

The protein belongs to the GlnE family. Requires Mg(2+) as cofactor.

It carries out the reaction [glutamine synthetase]-O(4)-(5'-adenylyl)-L-tyrosine + phosphate = [glutamine synthetase]-L-tyrosine + ADP. The catalysed reaction is [glutamine synthetase]-L-tyrosine + ATP = [glutamine synthetase]-O(4)-(5'-adenylyl)-L-tyrosine + diphosphate. Its function is as follows. Involved in the regulation of glutamine synthetase GlnA, a key enzyme in the process to assimilate ammonia. When cellular nitrogen levels are high, the C-terminal adenylyl transferase (AT) inactivates GlnA by covalent transfer of an adenylyl group from ATP to specific tyrosine residue of GlnA, thus reducing its activity. Conversely, when nitrogen levels are low, the N-terminal adenylyl removase (AR) activates GlnA by removing the adenylyl group by phosphorolysis, increasing its activity. The regulatory region of GlnE binds the signal transduction protein PII (GlnB) which indicates the nitrogen status of the cell. In Stenotrophomonas maltophilia (strain R551-3), this protein is Bifunctional glutamine synthetase adenylyltransferase/adenylyl-removing enzyme.